An 828-amino-acid chain; its full sequence is Periplasmic nitrate reductase (828 aa).

The tat-type signal signal peptide spans 1-31 (MKLSRRSFMKANAVAAAAAAAGLSVPGVARA). A 4Fe-4S Mo/W bis-MGD-type domain is found at 39 to 95 (IKWDKAPCRFCGTGCGVLVGTQQGRVVACQGDPDAPVNRGLNCIKGYFLPKIMYGKD). 4 residues coordinate [4Fe-4S] cluster: C46, C49, C53, and C81. Mo-bis(molybdopterin guanine dinucleotide) is bound by residues K83, Q150, N175, C179, 212 to 219 (WGSNMAEM), 243 to 247 (STYQH), 262 to 264 (QSD), M372, Q376, N482, 508 to 509 (SD), K531, D558, and 718 to 727 (TGRVLEHWHT). Substrate is bound at residue F794. Mo-bis(molybdopterin guanine dinucleotide) is bound by residues N802 and K819.

This sequence belongs to the prokaryotic molybdopterin-containing oxidoreductase family. NasA/NapA/NarB subfamily. Component of the periplasmic nitrate reductase NapAB complex composed of NapA and NapB. It depends on [4Fe-4S] cluster as a cofactor. Mo-bis(molybdopterin guanine dinucleotide) is required as a cofactor. In terms of processing, predicted to be exported by the Tat system. The position of the signal peptide cleavage has not been experimentally proven.

Its subcellular location is the periplasm. The catalysed reaction is 2 Fe(II)-[cytochrome] + nitrate + 2 H(+) = 2 Fe(III)-[cytochrome] + nitrite + H2O. In terms of biological role, catalytic subunit of the periplasmic nitrate reductase complex NapAB. Receives electrons from NapB and catalyzes the reduction of nitrate to nitrite. The chain is Periplasmic nitrate reductase from Escherichia coli O1:K1 / APEC.